Consider the following 210-residue polypeptide: C4-dicarboxylate TRAP transporter small permease protein DctQ (210 aa).

4 consecutive transmembrane segments (helical) span residues Glu13–Leu33, Ala77–Leu97, Val113–Ser133, and Ile160–Val180.

This sequence belongs to the TRAP transporter small permease family. In terms of assembly, the complex comprises the extracytoplasmic solute receptor protein DctP, and the two transmembrane proteins DctQ and DctM.

Its subcellular location is the cell inner membrane. Functionally, part of the tripartite ATP-independent periplasmic (TRAP) transport system DctPQM involved in C4-dicarboxylates uptake. The polypeptide is C4-dicarboxylate TRAP transporter small permease protein DctQ (Pseudomonas aeruginosa (strain ATCC 15692 / DSM 22644 / CIP 104116 / JCM 14847 / LMG 12228 / 1C / PRS 101 / PAO1)).